The chain runs to 488 residues: Catalase (488 aa).

The segment at 1 to 26 is disordered; that stretch reads MTDRKNLTTNQGVPVGDNQNSMTAGR. The segment covering 7–23 has biased composition (polar residues); the sequence is LTTNQGVPVGDNQNSMT. Active-site residues include histidine 55 and asparagine 128. Tyrosine 338 is a heme binding site.

It belongs to the catalase family. Requires heme as cofactor.

It localises to the cytoplasm. The catalysed reaction is 2 H2O2 = O2 + 2 H2O. Decomposes hydrogen peroxide into water and oxygen; serves to protect cells from the toxic effects of hydrogen peroxide. In Listeria monocytogenes serovar 1/2a (strain ATCC BAA-679 / EGD-e), this protein is Catalase (kat).